Reading from the N-terminus, the 372-residue chain is High-affinity lysophosphatidic acid receptor (372 aa).

Topologically, residues 1-38 are extracellular; that stretch reads MGCNNTALDNCMLPNLSIATAPLDLRFAFSTPLRMLLA. N-linked (GlcNAc...) asparagine glycosylation is found at N4 and N15. A helical membrane pass occupies residues 39 to 59; the sequence is IIMILMIAIAFLGNAIVCLIV. Topologically, residues 60 to 80 are cytoplasmic; sequence YQKPAMRSAINLLLATLAFSD. A helical transmembrane segment spans residues 81 to 101; it reads IMLSLFCMPFTAVTIITGSWL. Residues 102–108 lie on the Extracellular side of the membrane; it reads FGTQFCQ. A helical transmembrane segment spans residues 109–129; sequence ISAMLYWFFVLEGVAILLIIS. Over 130–149 the chain is Cytoplasmic; the sequence is VDRFLIIVQRQDKLNPHRAK. The helical transmembrane segment at 150–170 threads the bilayer; it reads IMIAASWVLSFCISLPSVVGW. At 171–198 the chain is on the extracellular side; it reads TLVEVPTRAPQCVLGYTEFSADRVYAVM. A helical transmembrane segment spans residues 199–219; sequence LIVAVFFIPFSVMLYSYLCIL. Residues 220-268 lie on the Cytoplasmic side of the membrane; that stretch reads NTVRRNAVRIHTHADSLCLSQVSKLGLMGLQRPHQMNVDMSFKTRAFTT. A helical transmembrane segment spans residues 269-289; that stretch reads ILILFIGFSLCWLPHSVFSLL. Residues 290 to 301 are Extracellular-facing; that stretch reads SVFSRTFYYSSS. The chain crosses the membrane as a helical span at residues 302 to 324; that stretch reads FYSISTCTLWLTYLKSVFNPVIY. The Cytoplasmic portion of the chain corresponds to 325–372; sequence CWRIKKFREACLEFMPKTFKILPNVRGRTRRRIRPSTIYVCGEHQSAV.

This sequence belongs to the G-protein coupled receptor 1 family. Ubiquitously expressed.

Its subcellular location is the cell membrane. In terms of biological role, highly selective receptor for lysophosphatidic acid (LPA), a mediator of diverse cellular activities. This is High-affinity lysophosphatidic acid receptor from Xenopus laevis (African clawed frog).